The sequence spans 793 residues: Signal transducer and activator of transcription 5A (793 aa).

Position 90 is a phosphotyrosine (Y90). S128 carries the phosphoserine modification. The 98-residue stretch at 589–686 (WNDGAILGFV…EVFAKYYTPV (98 aa)) folds into the SH2 domain. Residue Y682 is modified to Phosphotyrosine. Y694 bears the Phosphotyrosine; by JAK2 mark. Residues 772 to 793 (DSLDPRLSPPAGLFTSARSSLS) form a disordered region. Residue S779 is modified to Phosphoserine.

Belongs to the transcription factor STAT family. As to quaternary structure, forms a homodimer or a heterodimer with a related family member. Binds NR3C1. Interacts with NCOA1 and SOCS7. Interacts with ERBB4. Interacts with EBF4. In terms of processing, ISGylated. Post-translationally, tyrosine phosphorylated in response to KITLG/SCF, IL2, IL3, IL7, IL15, CSF2/GMCSF, GH1, PRL, EPO and THPO. Activated KIT promotes phosphorylation on tyrosine residues and subsequent translocation to the nucleus. Tyrosine phosphorylated in response to constitutively activated FGFR1, FGFR2, FGFR3 and FGFR4. Tyrosine phosphorylation is required for DNA-binding activity and dimerization. Serine phosphorylation is also required for maximal transcriptional activity. Tyrosine phosphorylated in response to signaling via activated FLT3; wild-type FLT3 results in much weaker phosphorylation than constitutively activated mutant FLT3. Alternatively, can be phosphorylated by JAK2 at Tyr-694. Expressed in heart, lung, and weakly in muscle.

The protein resides in the cytoplasm. The protein localises to the nucleus. Its function is as follows. Carries out a dual function: signal transduction and activation of transcription. Mediates cellular responses to the cytokine KITLG/SCF and other growth factors. May mediate cellular responses to activated FGFR1, FGFR2, FGFR3 and FGFR4. Binds to the GAS element and activates PRL-induced transcription. Regulates the expression of milk proteins during lactation. The sequence is that of Signal transducer and activator of transcription 5A (Stat5a) from Rattus norvegicus (Rat).